A 135-amino-acid polypeptide reads, in one-letter code: Large ribosomal subunit protein uL16c (135 aa).

The segment covering 1-17 (MLSPKRTRFRKQHRGRM) has biased composition (basic residues). The disordered stretch occupies residues 1-20 (MLSPKRTRFRKQHRGRMKGT).

This sequence belongs to the universal ribosomal protein uL16 family. In terms of assembly, part of the 50S ribosomal subunit.

It localises to the plastid. The protein resides in the chloroplast. The protein is Large ribosomal subunit protein uL16c of Lemna minor (Common duckweed).